A 121-amino-acid chain; its full sequence is Darcynin homolog (121 aa).

This sequence belongs to the darcynin family.

In Streptomyces avermitilis (strain ATCC 31267 / DSM 46492 / JCM 5070 / NBRC 14893 / NCIMB 12804 / NRRL 8165 / MA-4680), this protein is Darcynin homolog.